Consider the following 141-residue polypeptide: VLSPADKSNVKAAWGKVGGHAGDYGAEALERMFLSFPTTKTYFPHFDLSHGSAQVKGHGKKVADALTNAVAHVDDMPNALSALSDLHAHKLRVDPVNFKLLSHCLLVTLAAHHPADFTPAVHASLDKFLASVSTVLTSKYR.

The region spanning 1-141 (VLSPADKSNV…VSTVLTSKYR (141 aa)) is the Globin domain. S3 is subject to Phosphoserine. An N6-succinyllysine mark is found at K7 and K11. K16 is subject to N6-acetyllysine; alternate. K16 is modified (N6-succinyllysine; alternate). Residue Y24 is modified to Phosphotyrosine. S35 carries the post-translational modification Phosphoserine. At K40 the chain carries N6-succinyllysine. S49 bears the Phosphoserine mark. H58 contacts O2. A heme b-binding site is contributed by H87. S102 bears the Phosphoserine mark. A Phosphothreonine modification is found at T108. S124 and S131 each carry phosphoserine. 2 positions are modified to phosphothreonine: T134 and T137. S138 is subject to Phosphoserine.

This sequence belongs to the globin family. As to quaternary structure, heterotetramer of two alpha chains and two beta chains. As to expression, red blood cells.

In terms of biological role, involved in oxygen transport from the lung to the various peripheral tissues. Hemopressin acts as an antagonist peptide of the cannabinoid receptor CNR1. Hemopressin-binding efficiently blocks cannabinoid receptor CNR1 and subsequent signaling. This is Hemoglobin subunit alpha (HBA) from Saguinus oedipus (Cotton-top tamarin).